The chain runs to 185 residues: Segregation and condensation protein B (185 aa).

This sequence belongs to the ScpB family. In terms of assembly, homodimer. Homodimerization may be required to stabilize the binding of ScpA to the Smc head domains. Component of a cohesin-like complex composed of ScpA, ScpB and the Smc homodimer, in which ScpA and ScpB bind to the head domain of Smc. The presence of the three proteins is required for the association of the complex with DNA.

It is found in the cytoplasm. Its function is as follows. Participates in chromosomal partition during cell division. May act via the formation of a condensin-like complex containing Smc and ScpA that pull DNA away from mid-cell into both cell halves. The polypeptide is Segregation and condensation protein B (Carboxydothermus hydrogenoformans (strain ATCC BAA-161 / DSM 6008 / Z-2901)).